The following is a 431-amino-acid chain: Chorismate synthase 2, chloroplastic (431 aa).

The N-terminal 48 residues, 1–48, are a transit peptide targeting the chloroplast; that stretch reads MASSMLTKQFLGAPFSSFGSGQQPSKLCSSNLRFPTHRSQPKRLEIQA. Positions 93–141 are disordered; sequence DRRRPGQSRITTPRKETDTCKISSGTADGLTTGSPIKVEVPNTDQRGND. Residues 112 to 126 are compositionally biased toward polar residues; the sequence is CKISSGTADGLTTGS.

The protein belongs to the chorismate synthase family. Homotetramer. Requires FMNH2 as cofactor. As to expression, predominantly expressed in flowers and roots and, to a lesser extent, in stems, leaves, and cotyledons.

The protein resides in the plastid. It localises to the chloroplast. It catalyses the reaction 5-O-(1-carboxyvinyl)-3-phosphoshikimate = chorismate + phosphate. Its pathway is metabolic intermediate biosynthesis; chorismate biosynthesis; chorismate from D-erythrose 4-phosphate and phosphoenolpyruvate: step 7/7. Its function is as follows. Catalyzes the last common step of the biosynthesis of aromatic amino acids, produced via the shikimic acid pathway. This is Chorismate synthase 2, chloroplastic (CS2) from Solanum lycopersicum (Tomato).